Consider the following 173-residue polypeptide: ATP-dependent protease subunit HslV (173 aa).

Thr2 is an active-site residue. Residues Gly158, Asp161, and Ser164 each coordinate Na(+).

It belongs to the peptidase T1B family. HslV subfamily. As to quaternary structure, a double ring-shaped homohexamer of HslV is capped on each side by a ring-shaped HslU homohexamer. The assembly of the HslU/HslV complex is dependent on binding of ATP.

It is found in the cytoplasm. It catalyses the reaction ATP-dependent cleavage of peptide bonds with broad specificity.. Allosterically activated by HslU binding. Its function is as follows. Protease subunit of a proteasome-like degradation complex believed to be a general protein degrading machinery. This is ATP-dependent protease subunit HslV from Actinobacillus pleuropneumoniae serotype 5b (strain L20).